Reading from the N-terminus, the 89-residue chain is Large ribosomal subunit protein eL43 (89 aa).

Residues cysteine 38, cysteine 41, cysteine 56, and cysteine 59 each contribute to the Zn(2+) site. The segment at 38 to 59 adopts a C4-type zinc-finger fold; sequence CPSCDRPGVKRESRGIWKCRKC.

This sequence belongs to the eukaryotic ribosomal protein eL43 family. Putative zinc-binding subfamily. In terms of assembly, part of the 50S ribosomal subunit. Zn(2+) is required as a cofactor.

Its function is as follows. Binds to the 23S rRNA. This chain is Large ribosomal subunit protein eL43, found in Methanothermobacter thermautotrophicus (strain ATCC 29096 / DSM 1053 / JCM 10044 / NBRC 100330 / Delta H) (Methanobacterium thermoautotrophicum).